The sequence spans 395 residues: uncharacterized protein (395 aa).

Transmembrane regions (helical) follow at residues 19-39 (IGIA…IAII), 49-69 (VLLI…IYEL), 87-107 (LTWI…AVGG), 137-157 (LVII…PLGT), 172-192 (YINL…FYLI), 206-226 (TINI…SLIA), 252-272 (LIGG…MGMG), 279-299 (LFIM…KILA), 311-331 (GLVF…GSLI), and 359-379 (VLCT…GAVI).

The protein belongs to the chloride channel (TC 2.A.49) family.

The protein localises to the cell membrane. This is an uncharacterized protein from Methanocaldococcus jannaschii (strain ATCC 43067 / DSM 2661 / JAL-1 / JCM 10045 / NBRC 100440) (Methanococcus jannaschii).